The following is a 354-amino-acid chain: Heat-inducible transcription repressor HrcA (354 aa).

This sequence belongs to the HrcA family.

Negative regulator of class I heat shock genes (grpE-dnaK-dnaJ and groELS operons). Prevents heat-shock induction of these operons. This Novosphingobium aromaticivorans (strain ATCC 700278 / DSM 12444 / CCUG 56034 / CIP 105152 / NBRC 16084 / F199) protein is Heat-inducible transcription repressor HrcA.